We begin with the raw amino-acid sequence, 274 residues long: Penicillin-insensitive murein endopeptidase (274 aa).

Residues 1–19 (MKNTVIALLALLASAGSLA) form the signal peptide. 3 disulfides stabilise this stretch: Cys-44–Cys-265, Cys-187–Cys-235, and Cys-216–Cys-223. Residues His-110, His-113, Asp-120, Asp-147, His-150, and His-211 each coordinate Zn(2+). A disordered region spans residues 224–263 (EDQAPPPPGDGCGAELQSWFEPPKPGSTPPVKKTPPPLPP). Over residues 245-263 (PPKPGSTPPVKKTPPPLPP) the composition is skewed to pro residues.

This sequence belongs to the peptidase M74 family. In terms of assembly, dimer. The cofactor is Zn(2+).

The protein localises to the periplasm. Its function is as follows. Murein endopeptidase that cleaves the D-alanyl-meso-2,6-diamino-pimelyl amide bond that connects peptidoglycan strands. Likely plays a role in the removal of murein from the sacculus. This Klebsiella pneumoniae (strain 342) protein is Penicillin-insensitive murein endopeptidase.